Here is a 439-residue protein sequence, read N- to C-terminus: 3-phosphoshikimate 1-carboxyvinyltransferase (439 aa).

3 residues coordinate 3-phosphoshikimate: Lys-27, Ser-28, and Arg-32. Residue Lys-27 participates in phosphoenolpyruvate binding. Residues Gly-101 and Arg-130 each contribute to the phosphoenolpyruvate site. 3-phosphoshikimate is bound by residues Ser-175, Gln-177, Asp-326, and Lys-353. Gln-177 contacts phosphoenolpyruvate. Catalysis depends on Asp-326, which acts as the Proton acceptor. Phosphoenolpyruvate contacts are provided by Arg-357 and Arg-399.

This sequence belongs to the EPSP synthase family. In terms of assembly, monomer.

It is found in the cytoplasm. It catalyses the reaction 3-phosphoshikimate + phosphoenolpyruvate = 5-O-(1-carboxyvinyl)-3-phosphoshikimate + phosphate. The protein operates within metabolic intermediate biosynthesis; chorismate biosynthesis; chorismate from D-erythrose 4-phosphate and phosphoenolpyruvate: step 6/7. Functionally, catalyzes the transfer of the enolpyruvyl moiety of phosphoenolpyruvate (PEP) to the 5-hydroxyl of shikimate-3-phosphate (S3P) to produce enolpyruvyl shikimate-3-phosphate and inorganic phosphate. The chain is 3-phosphoshikimate 1-carboxyvinyltransferase from Synechococcus sp. (strain CC9311).